A 275-amino-acid polypeptide reads, in one-letter code: Diaminopimelate epimerase (275 aa).

The substrate site is built by Asn-12, Gln-45, and Asn-65. Cys-74 serves as the catalytic Proton donor. Residues 75 to 76 (GN), Asn-158, Asn-191, and 209 to 210 (ER) each bind substrate. Cys-218 functions as the Proton acceptor in the catalytic mechanism. 219 to 220 (GT) contacts substrate.

The protein belongs to the diaminopimelate epimerase family. In terms of assembly, homodimer.

It is found in the cytoplasm. The enzyme catalyses (2S,6S)-2,6-diaminopimelate = meso-2,6-diaminopimelate. Its pathway is amino-acid biosynthesis; L-lysine biosynthesis via DAP pathway; DL-2,6-diaminopimelate from LL-2,6-diaminopimelate: step 1/1. In terms of biological role, catalyzes the stereoinversion of LL-2,6-diaminopimelate (L,L-DAP) to meso-diaminopimelate (meso-DAP), a precursor of L-lysine and an essential component of the bacterial peptidoglycan. This is Diaminopimelate epimerase from Shewanella sp. (strain MR-4).